The sequence spans 140 residues: Ribosome-binding factor A (140 aa).

The segment at 116 to 140 is disordered; the sequence is RERQERGEIPPGSDDAQNCHDDEPS.

Belongs to the RbfA family. Monomer. Binds 30S ribosomal subunits, but not 50S ribosomal subunits or 70S ribosomes.

The protein localises to the cytoplasm. One of several proteins that assist in the late maturation steps of the functional core of the 30S ribosomal subunit. Associates with free 30S ribosomal subunits (but not with 30S subunits that are part of 70S ribosomes or polysomes). Required for efficient processing of 16S rRNA. May interact with the 5'-terminal helix region of 16S rRNA. In Synechococcus sp. (strain WH7803), this protein is Ribosome-binding factor A.